The chain runs to 381 residues: L-lactate dehydrogenase (381 aa).

The 380-residue stretch at M1 to G380 folds into the FMN hydroxy acid dehydrogenase domain. Residue Y24 participates in substrate binding. FMN is bound by residues S106 and Q127. Y129 is a binding site for substrate. Residue T155 coordinates FMN. R164 contacts substrate. K251 contributes to the FMN binding site. Catalysis depends on H275, which acts as the Proton acceptor. R278 provides a ligand contact to substrate. Residue D306–R330 coordinates FMN.

This sequence belongs to the FMN-dependent alpha-hydroxy acid dehydrogenase family. As to quaternary structure, homotetramer. It depends on FMN as a cofactor.

It localises to the cell inner membrane. The catalysed reaction is (S)-lactate + A = pyruvate + AH2. Its function is as follows. Catalyzes the conversion of L-lactate to pyruvate. Is coupled to the respiratory chain. This is L-lactate dehydrogenase from Pseudomonas aeruginosa (strain UCBPP-PA14).